A 493-amino-acid chain; its full sequence is UDP-N-acetylmuramate--L-alanine ligase (493 aa).

112–118 (GTHGKTT) serves as a coordination point for ATP.

This sequence belongs to the MurCDEF family.

The protein localises to the cytoplasm. The catalysed reaction is UDP-N-acetyl-alpha-D-muramate + L-alanine + ATP = UDP-N-acetyl-alpha-D-muramoyl-L-alanine + ADP + phosphate + H(+). Its pathway is cell wall biogenesis; peptidoglycan biosynthesis. In terms of biological role, cell wall formation. The protein is UDP-N-acetylmuramate--L-alanine ligase of Nitrosospira multiformis (strain ATCC 25196 / NCIMB 11849 / C 71).